The following is a 302-amino-acid chain: Succinate--CoA ligase [ADP-forming] subunit alpha (302 aa).

Residues 17–20 (TGST), lysine 43, and 96–98 (ITE) contribute to the CoA site. Residue tyrosine 159 coordinates substrate. The active-site Tele-phosphohistidine intermediate is the histidine 247.

The protein belongs to the succinate/malate CoA ligase alpha subunit family. In terms of assembly, heterotetramer of two alpha and two beta subunits.

It carries out the reaction succinate + ATP + CoA = succinyl-CoA + ADP + phosphate. It catalyses the reaction GTP + succinate + CoA = succinyl-CoA + GDP + phosphate. Its pathway is carbohydrate metabolism; tricarboxylic acid cycle; succinate from succinyl-CoA (ligase route): step 1/1. In terms of biological role, succinyl-CoA synthetase functions in the citric acid cycle (TCA), coupling the hydrolysis of succinyl-CoA to the synthesis of either ATP or GTP and thus represents the only step of substrate-level phosphorylation in the TCA. The alpha subunit of the enzyme binds the substrates coenzyme A and phosphate, while succinate binding and nucleotide specificity is provided by the beta subunit. In Staphylococcus aureus (strain MSSA476), this protein is Succinate--CoA ligase [ADP-forming] subunit alpha.